Consider the following 477-residue polypeptide: MSVLALGLSHRSAPVTLLERVALSGEVRLKLMTEMVNTSAVNEAMVVSTCNRTEVYADVDQFHPGVAAICELLSQYTGVSQEELTQHCYVHYEERAVQHLFSVACGLDSMVVGEGQILGQVRNALKDAQHVGTLGRVLNDLGQRALRVGKRAHTETHLDKAGASMVSFGLTVAGRFLTPDREPQPSAAAAVCPVDGDTGVEVSAALPDPQLLTGRRIMVLGAGSMSALAANTVARHGASTILIANRTFDRAQRLAECLTEGYESVRSSAVPFEDAARHLADIDLVISCTGAQGIVLTAEQVAAGGDRATRPLVFLDLALPHDIDKAVRKLPGVHLVDIEELRDAAEDGTATGQVADLTAVRDIVAEEVAEYQAVRSAERVAPTVVALRSKAQKVVESELERLNGRLPGIDDRTRAEITRTVRRVVDKLLHQPTVRVKQLATGPEGAVYAEALRELFDLDPAIPSAVVKPGTALGEER.

Residues 49–52 (TCNR), Ser-109, 114–116 (EGQ), and Gln-120 contribute to the substrate site. The active-site Nucleophile is the Cys-50. 221 to 226 (GAGSMS) serves as a coordination point for NADP(+).

Belongs to the glutamyl-tRNA reductase family. As to quaternary structure, homodimer.

The enzyme catalyses (S)-4-amino-5-oxopentanoate + tRNA(Glu) + NADP(+) = L-glutamyl-tRNA(Glu) + NADPH + H(+). It participates in porphyrin-containing compound metabolism; protoporphyrin-IX biosynthesis; 5-aminolevulinate from L-glutamyl-tRNA(Glu): step 1/2. Functionally, catalyzes the NADPH-dependent reduction of glutamyl-tRNA(Glu) to glutamate 1-semialdehyde (GSA). This is Glutamyl-tRNA reductase from Thermobifida fusca (strain YX).